We begin with the raw amino-acid sequence, 309 residues long: Serine/threonine-protein phosphatase CPPED1 (309 aa).

Residues 47–250 form a catalytic region; that stretch reads WRIGDCDSGG…FSGHYHRNAG (204 aa). Residues aspartate 51, aspartate 88, asparagine 125, and histidine 244 each contribute to the a divalent metal cation site.

The protein belongs to the metallophosphoesterase superfamily. CPPED1 family. A divalent metal cation serves as cofactor.

Its subcellular location is the cytoplasm. It carries out the reaction O-phospho-L-seryl-[protein] + H2O = L-seryl-[protein] + phosphate. The enzyme catalyses O-phospho-L-threonyl-[protein] + H2O = L-threonyl-[protein] + phosphate. Protein phosphatase involved in the dephosphorylation of AKT kinase family. The sequence is that of Serine/threonine-protein phosphatase CPPED1 (cpped1) from Danio rerio (Zebrafish).